A 475-amino-acid polypeptide reads, in one-letter code: Ribulose bisphosphate carboxylase large chain (475 aa).

The propeptide occupies 1–2 (MS). Position 3 is an N-acetylproline (P3). K14 is modified (N6,N6,N6-trimethyllysine). The substrate site is built by N123 and T173. K175 functions as the Proton acceptor in the catalytic mechanism. K177 contributes to the substrate binding site. Mg(2+)-binding residues include K201, D203, and E204. Position 201 is an N6-carboxylysine (K201). Catalysis depends on H294, which acts as the Proton acceptor. The substrate site is built by R295, H327, and S379.

Belongs to the RuBisCO large chain family. Type I subfamily. Heterohexadecamer of 8 large chains and 8 small chains. Mg(2+) serves as cofactor.

Its subcellular location is the plastid. It is found in the chloroplast. It carries out the reaction 2 (2R)-3-phosphoglycerate + 2 H(+) = D-ribulose 1,5-bisphosphate + CO2 + H2O. The catalysed reaction is D-ribulose 1,5-bisphosphate + O2 = 2-phosphoglycolate + (2R)-3-phosphoglycerate + 2 H(+). In terms of biological role, ruBisCO catalyzes two reactions: the carboxylation of D-ribulose 1,5-bisphosphate, the primary event in carbon dioxide fixation, as well as the oxidative fragmentation of the pentose substrate in the photorespiration process. Both reactions occur simultaneously and in competition at the same active site. The sequence is that of Ribulose bisphosphate carboxylase large chain from Coleochaete orbicularis (Charophycean green alga).